The sequence spans 465 residues: WASH complex subunit 1 (465 aa).

The required for WASH complex assembly stretch occupies residues 1–54; sequence MTPVRMQHSLAGQTYAVPFIQPDLRREEAVQQMADALQYLQKVSGDIFSRISQQ. The tract at residues 1–167 is WHD1; the sequence is MTPVRMQHSL…EGLGGLPSNI (167 aa). A Glycyl lysine isopeptide (Lys-Gly) (interchain with G-Cter in ubiquitin) cross-link involves residue K220. Disordered stretches follow at residues 297–359, 376–407, and 423–465; these read QDGV…VDPS, GKAK…QGGH, and ISGK…DWES. The span at 302 to 314 shows a compositional bias: pro residues; it reads TPPPPPPPPPPAP. Positions 349-465 are VCA; that stretch reads QGAPREVVDP…AEEDEDDWES (117 aa). Residues 361–383 form the WH2 domain; sequence GWATLLESIRQAGGIGKAKLRSM. Basic and acidic residues predominate over residues 382 to 398; that stretch reads SMKERKLEKQQQKEQEQ. The segment covering 424–436 has biased composition (gly residues); the sequence is SGKGPGAGEGPGG. Residues 456 to 465 are compositionally biased toward acidic residues; the sequence is AEEDEDDWES.

Belongs to the WASH1 family. As to quaternary structure, component of the WASH core complex also described as WASH regulatory complex (SHRC) composed of WASH (WASHC1, WASH2P or WASH3P), WASHC2 (WASHC2A or WASHC2C), WASHC3, WASHC4 and WASHC5. The WASH core complex associates via WASHC2 with the F-actin-capping protein dimer (formed by CAPZA1, CAPZA2 or CAPZA3 and CAPZB) in a transient or substoichiometric manner which was initially described as WASH complex. Interacts (via WHD1 region) with WASHC2C; the interaction is direct. Interacts with VPS35; mediates the association with the retromer CSC complex. Interacts with FKBP15. Interacts with alpha-tubulin. Interacts with BECN1; this interaction can be competed out by AMBRA1 binding. Interacts with BLOC1S2; may associate with the BLOC-1 complex. Interacts with tubulin gamma chain (TUBG1 or TUBG2). Interacts with EXOC1, EXOC4, EXOC8; in MMP14-positive endosomes in breast tumor cells; indicative for an association with the exocyst complex. Interacts with TBC1D23. In terms of processing, ubiquitinated at Lys-220 via 'Lys-63'-linked ubiquitin chains by the TRIM27:MAGEL2 E3 ubiquitin ligase complex, leading to promote endosomal F-actin assembly.

It is found in the early endosome membrane. The protein resides in the recycling endosome membrane. Its subcellular location is the late endosome. The protein localises to the cytoplasmic vesicle. It localises to the autophagosome. It is found in the cytoplasm. The protein resides in the cytoskeleton. Its subcellular location is the microtubule organizing center. The protein localises to the centrosome. It localises to the centriole. Functionally, acts as a component of the WASH core complex that functions as a nucleation-promoting factor (NPF) at the surface of endosomes, where it recruits and activates the Arp2/3 complex to induce actin polymerization, playing a key role in the fission of tubules that serve as transport intermediates during endosome sorting. Involved in endocytic trafficking of EGF. Involved in transferrin receptor recycling. Regulates the trafficking of endosomal alpha5beta1 integrin to the plasma membrane and involved in invasive cell migration. In T-cells involved in endosome-to-membrane recycling of receptors including T-cell receptor (TCR), CD28 and ITGAL; proposed to be implicated in T cell proliferation and effector function. In dendritic cells involved in endosome-to-membrane recycling of major histocompatibility complex (MHC) class II probably involving retromer and subsequently allowing antigen sampling, loading and presentation during T-cell activation. Involved in Arp2/3 complex-dependent actin assembly driving Salmonella typhimurium invasion independent of ruffling. Involved in the exocytosis of MMP14 leading to matrix remodeling during invasive migration and implicating late endosome-to-plasma membrane tubular connections and cooperation with the exocyst complex. Involved in negative regulation of autophagy independently from its role in endosomal sorting by inhibiting BECN1 ubiquitination to inactivate PIK3C3/Vps34 activity. The polypeptide is WASH complex subunit 1 (Homo sapiens (Human)).